Here is a 1457-residue protein sequence, read N- to C-terminus: Ras guanine nucleotide exchange factor C (1457 aa).

Residues 1-55 (MSVFTFGHGSNGALGLGKITDDTCPTPQKVNYFTEIDKRVKKVACGSYHTVFVTD) form an RCC1 1 repeat. Disordered stretches follow at residues 75-196 (FYTS…PLLN), 209-264 (HYES…RINK), 282-313 (EQQQ…DEDP), and 376-404 (QQQL…SLQT). Low complexity-rich tracts occupy residues 83–121 (TTTT…KIVN) and 134–158 (SNTT…LPPT). Basic and acidic residues-rich tracts occupy residues 171-188 (IKLD…ELIQ) and 209-224 (HYES…KDNE). Residues 225 to 237 (NENEEDEDDDDDD) show a composition bias toward acidic residues. Basic and acidic residues predominate over residues 238 to 249 (STIRQNEDKESS). Low complexity-rich tracts occupy residues 283–292 (QQQQPQQPQQ) and 376–403 (QQQL…SSLQ). RCC1 repeat units lie at residues 351-401 (GGNV…SSSS), 432-483 (WGEL…CYTE), 485-549 (GKMY…VLTQ), and 590-647 (SGEV…ALVE). Residues 650–971 (PKTKLALQLV…QVLLERMNQN (322 aa)) enclose the DH domain. Residues 703 to 715 (LPPSLKGLSGGLP) are compositionally biased toward low complexity. The segment at 703–762 (LPPSLKGLSGGLPDNANNTIKNGKDKDNHHNGDSNGHHSNGHYHGNGNNGNNSITTSNSI) is disordered. The span at 724–738 (NGKDKDNHHNGDSNG) shows a compositional bias: basic and acidic residues. A compositionally biased stretch (low complexity) spans 739-762 (HHSNGHYHGNGNNGNNSITTSNSI). Residues 989-1109 (GNPQIMGGSL…SVSQIKLQYF (121 aa)) enclose the N-terminal Ras-GEF domain. Positions 1127–1210 (LTQNEITTPP…NNNNNNNNLT (84 aa)) are disordered. Positions 1138-1211 (LQIQNNNQNN…NNNNNNNLTN (74 aa)) form a coiled coil. Positions 1142-1210 (NNNQNNNLEN…NNNNNNNNLT (69 aa)) are enriched in low complexity. The Ras-GEF domain maps to 1232 to 1454 (QPIEVAQTLT…DDKQAQKISS (223 aa)).

Functionally, promotes the exchange of Ras-bound GDP by GTP. This Dictyostelium discoideum (Social amoeba) protein is Ras guanine nucleotide exchange factor C (gefC).